Consider the following 313-residue polypeptide: Olfactory receptor 2B6 (313 aa).

Over 1 to 27 (MSWANESITGEFVLLGFSDQPWLEFPL) the chain is Extracellular. N-linked (GlcNAc...) asparagine glycosylation occurs at asparagine 5. Residues 28 to 48 (FVVFLTSYIVTIFGNLNIILV) traverse the membrane as a helical segment. Over 49-57 (SHLDPKLHT) the chain is Cytoplasmic. The chain crosses the membrane as a helical span at residues 58 to 78 (PMYFFLTNLSVIDLCYITCTV). Topologically, residues 79 to 97 (PQMLVNLRSIRKVISFGGC) are extracellular. A disulfide bridge links cysteine 97 with cysteine 189. Residues 98-118 (VVQLFMFLALGATECVLLPVM) form a helical membrane-spanning segment. At 119–143 (SFDRFVAICRPLHYSVIMHQRLCLQ) the chain is on the cytoplasmic side. A helical membrane pass occupies residues 144-164 (LAAVSWIIGFGNSVWLSILTL). Topologically, residues 165 to 200 (QLPRCGHYVIDHFLCEVPALLKLSCVDVTANEAELF) are extracellular. The chain crosses the membrane as a helical span at residues 201–221 (FVSVFFHLTPLSLILTSYAFI). The Cytoplasmic segment spans residues 222-244 (ARAILKIQSAEGRQKAFGTCSSH). A helical transmembrane segment spans residues 245 to 265 (LIVVSLFYGTALSVYFLPPSP). At 266-271 (HSKNRR) the chain is on the extracellular side. A helical transmembrane segment spans residues 272-292 (KMVPLFYGIIAPMLNPLIYTL). At 293–313 (RNKEVKDAFKRLIKRVFLSKN) the chain is on the cytoplasmic side.

The protein belongs to the G-protein coupled receptor 1 family.

It is found in the cell membrane. Functionally, odorant receptor. The sequence is that of Olfactory receptor 2B6 from Mus musculus (Mouse).